We begin with the raw amino-acid sequence, 267 residues long: Octanoyltransferase (267 aa).

One can recognise a BPL/LPL catalytic domain in the interval 77-265 (GTASELVWLV…AFESVFGPRQ (189 aa)). Residues 116–123 (RGGEYTYH), 196–198 (AIG), and 209–211 (GIA) contribute to the substrate site. Catalysis depends on cysteine 227, which acts as the Acyl-thioester intermediate.

Belongs to the LipB family.

It localises to the cytoplasm. The enzyme catalyses octanoyl-[ACP] + L-lysyl-[protein] = N(6)-octanoyl-L-lysyl-[protein] + holo-[ACP] + H(+). Its pathway is protein modification; protein lipoylation via endogenous pathway; protein N(6)-(lipoyl)lysine from octanoyl-[acyl-carrier-protein]: step 1/2. In terms of biological role, catalyzes the transfer of endogenously produced octanoic acid from octanoyl-acyl-carrier-protein onto the lipoyl domains of lipoate-dependent enzymes. Lipoyl-ACP can also act as a substrate although octanoyl-ACP is likely to be the physiological substrate. The polypeptide is Octanoyltransferase (Brucella suis biovar 1 (strain 1330)).